We begin with the raw amino-acid sequence, 328 residues long: Endo-beta-1,4-glucanase B (328 aa).

Positions 1–17 are cleaved as a signal peptide; sequence MKVNTLLVAVAAGTAMA. An N-linked (GlcNAc...) asparagine glycan is attached at N95. Catalysis depends on E155, which acts as the Proton donor. The Nucleophile role is filled by E262.

The protein belongs to the glycosyl hydrolase 5 (cellulase A) family.

It is found in the secreted. The enzyme catalyses Endohydrolysis of (1-&gt;4)-beta-D-glucosidic linkages in cellulose, lichenin and cereal beta-D-glucans.. Has endoglucanase activity on substrates containing beta-1,4 glycosidic bonds, like in carboxymethylcellulose (CMC), hydroxyethylcellulose (HEC) and beta-glucan. Involved in the degradation of complex natural cellulosic substrates. This chain is Endo-beta-1,4-glucanase B (eglB), found in Emericella nidulans (strain FGSC A4 / ATCC 38163 / CBS 112.46 / NRRL 194 / M139) (Aspergillus nidulans).